A 78-amino-acid chain; its full sequence is Small ribosomal subunit protein bS20 (78 aa).

The protein belongs to the bacterial ribosomal protein bS20 family.

Binds directly to 16S ribosomal RNA. This chain is Small ribosomal subunit protein bS20, found in Streptococcus sanguinis (strain SK36).